The primary structure comprises 333 residues: 4-hydroxyproline 2-epimerase (333 aa).

C91 (proton acceptor) is an active-site residue. Substrate contacts are provided by residues 92–93 (GH), H225, and D250. C254 functions as the Proton donor in the catalytic mechanism. 255 to 256 (GT) is a substrate binding site.

This sequence belongs to the proline racemase family.

It carries out the reaction trans-4-hydroxy-L-proline = cis-4-hydroxy-D-proline. Catalyzes the epimerization of trans-4-hydroxy-L-proline (t4LHyp) to cis-4-hydroxy-D-proline (c4DHyp). Is likely involved in a degradation pathway that converts t4LHyp to alpha-ketoglutarate. Displays no proline racemase activity. This chain is 4-hydroxyproline 2-epimerase, found in Streptosporangium roseum (strain ATCC 12428 / DSM 43021 / JCM 3005 / KCTC 9067 / NCIMB 10171 / NRRL 2505 / NI 9100).